Consider the following 367-residue polypeptide: Quinolinate synthase (367 aa).

His45 and Ser62 together coordinate iminosuccinate. Cys109 contacts [4Fe-4S] cluster. Iminosuccinate is bound by residues 140–142 and Ser161; that span reads YVN. Cys229 contributes to the [4Fe-4S] cluster binding site. Iminosuccinate contacts are provided by residues 255-257 and Thr272; that span reads HPE. Cys319 lines the [4Fe-4S] cluster pocket.

Belongs to the quinolinate synthase family. Type 3 subfamily. [4Fe-4S] cluster serves as cofactor.

The protein resides in the cytoplasm. The enzyme catalyses iminosuccinate + dihydroxyacetone phosphate = quinolinate + phosphate + 2 H2O + H(+). It participates in cofactor biosynthesis; NAD(+) biosynthesis; quinolinate from iminoaspartate: step 1/1. Its function is as follows. Catalyzes the condensation of iminoaspartate with dihydroxyacetone phosphate to form quinolinate. The sequence is that of Quinolinate synthase from Halalkalibacterium halodurans (strain ATCC BAA-125 / DSM 18197 / FERM 7344 / JCM 9153 / C-125) (Bacillus halodurans).